We begin with the raw amino-acid sequence, 282 residues long: MRAVWTGAVNFGLVNVPVKMYAATEEHDLKGHLAHVQDGGRIRYHKVCETCGEQVHTADLGKVFEVDGQTALLTDEDLAELPSENNKVIDVVEFVPAGEVDPILLDKPYYLNAEGSVRPYALLARTLSDADKVAIVRVTLRSKEHLAVLRVTGKNEVLTLQTLRWPDEVREPDFPKLDNKPELSEAELKVAAMLVDELSAPFNPDKHQDTYKVELRALVESKLEPVEVPEDVSGLLAKLEASVKPKQAKPDIRTWAKAQGFKISARGRIPKDIVDKYEGAMA.

The region spanning 9-189 is the Ku domain; that stretch reads VNFGLVNVPV…KPELSEAELK (181 aa).

In terms of assembly, homodimer. Interacts with host LigD, maybe via the LigD Pol domain.

Required for replication of viruses with short cos ends (4 bases). Stimulates dsDNA end-joining by host LigD; in conjunction with M.smegmatis or M.tuberculosis LigD can reconstitute NHEJ in S.cerevisiae. Binds dsDNA with either blunt, 5'- or 3-overhangs, protecting it from host exonuclease degradation. This chain is Protein Ku (206), found in Mycobacterium phage Omega (Mycobacteriophage Omega).